Reading from the N-terminus, the 128-residue chain is L-ectoine synthase (128 aa).

Belongs to the ectoine synthase family.

The enzyme catalyses (2S)-4-acetamido-2-aminobutanoate = L-ectoine + H2O. The protein operates within amine and polyamine biosynthesis; ectoine biosynthesis; L-ectoine from L-aspartate 4-semialdehyde: step 3/3. Catalyzes the circularization of gamma-N-acetyl-alpha,gamma-diaminobutyric acid (ADABA) to ectoine (1,4,5,6-tetrahydro-2-methyl-4-pyrimidine carboxylic acid), which is an excellent osmoprotectant. This chain is L-ectoine synthase, found in Virgibacillus pantothenticus.